Consider the following 436-residue polypeptide: Trigger factor (436 aa).

In terms of domain architecture, PPIase FKBP-type spans Gly-164 to Pro-249.

The protein belongs to the FKBP-type PPIase family. Tig subfamily.

The protein localises to the cytoplasm. It carries out the reaction [protein]-peptidylproline (omega=180) = [protein]-peptidylproline (omega=0). In terms of biological role, involved in protein export. Acts as a chaperone by maintaining the newly synthesized protein in an open conformation. Functions as a peptidyl-prolyl cis-trans isomerase. In Limosilactobacillus reuteri (strain DSM 20016) (Lactobacillus reuteri), this protein is Trigger factor.